Consider the following 849-residue polypeptide: Villin-1 (849 aa).

Gelsolin-like repeat units follow at residues 30-107, 147-213, 262-335, 405-475, and 527-566; these read IEKS…DKFL, RVTE…EDGK, VPVE…TVEF, QEQL…PEMF, and AIQVDLAASSLNSSHCYILQAGGSFFTWLGSLSSPSDHNL. Residues 739-849 form a disordered region; it reads ETPERSLRKS…AVATGTPRRR (111 aa). Low complexity-rich tracts occupy residues 747 to 782 and 791 to 823; these read KSSSSSLPRRSPGTSSSEPTTPEQRAAARTFASAST and PAALSPSLSTPSPSPRSRSSASSSPASWNSTPS.

It belongs to the villin/gelsolin family. As to expression, expressed in roots, young leaves, and inflorescences, mostly in the vasculature of roots, leaves, and filaments of the anthers. Also detected in guard cells.

It is found in the cytoplasm. It localises to the cytoskeleton. In terms of biological role, ca(2+)-independent actin-binding protein. Binds actin microfilaments (MFs). Involved in actin filament bundling, severing and capping. Caps the barbed end of actin filaments and protects them from disassembly. Promotes VLN3-mediated MF severing. This Oryza sativa subsp. japonica (Rice) protein is Villin-1.